A 173-amino-acid polypeptide reads, in one-letter code: Shikimate kinase (173 aa).

14-19 contacts ATP; it reads GAGKST. Ser-18 provides a ligand contact to Mg(2+). Substrate is bound by residues Asp-36, Arg-60, and Gly-82. Arg-120 serves as a coordination point for ATP. Substrate is bound at residue Arg-140. Gln-157 provides a ligand contact to ATP.

The protein belongs to the shikimate kinase family. Monomer. Mg(2+) serves as cofactor.

Its subcellular location is the cytoplasm. It carries out the reaction shikimate + ATP = 3-phosphoshikimate + ADP + H(+). It participates in metabolic intermediate biosynthesis; chorismate biosynthesis; chorismate from D-erythrose 4-phosphate and phosphoenolpyruvate: step 5/7. Its function is as follows. Catalyzes the specific phosphorylation of the 3-hydroxyl group of shikimic acid using ATP as a cosubstrate. The chain is Shikimate kinase from Buchnera aphidicola subsp. Schizaphis graminum (strain Sg).